The primary structure comprises 746 residues: Teichoic acid poly(glycerol phosphate) polymerase (746 aa).

Residues 473 to 477, R540, 573 to 574, 610 to 612, 652 to 653, and D657 each bind CDP-glycerol; these read WHGTP, PT, RMH, and SS.

Belongs to the CDP-glycerol glycerophosphotransferase family.

It localises to the cell membrane. The catalysed reaction is 4-O-[(2R)-glycerylphospho]-N-acetyl-beta-D-mannosaminyl-(1-&gt;4)-N-acetyl-alpha-D-glucosaminyl di-trans,octa-cis-undecaprenyl diphosphate + n CDP-glycerol = 4-O-{[(2R)-1-glycerylphospho](n)-(2R)-1-glycerylphospho}-N-acetyl-beta-D-mannosaminyl-(1-&gt;4)-N-acetyl-alpha-D-glucosaminyl undecaprenyl diphosphate + n CMP + n H(+). It functions in the pathway cell wall biogenesis; poly(glycerol phosphate) teichoic acid biosynthesis. Its function is as follows. Responsible for the polymerization of the main chain of the major teichoic acid by sequential transfer of glycerol phosphate units from CDP-glycerol to the disaccharide linkage unit. Synthesizes polymers of approximately 35 glycerol phosphate units in length. The chain is Teichoic acid poly(glycerol phosphate) polymerase (tagF) from Bacillus subtilis (strain 168).